The sequence spans 146 residues: Transcriptional regulator MraZ (146 aa).

SpoVT-AbrB domains follow at residues 6 to 49 (TYDH…TEEE) and 78 to 121 (THEV…DQKS).

The protein belongs to the MraZ family. In terms of assembly, forms oligomers.

Its subcellular location is the cytoplasm. It is found in the nucleoid. The chain is Transcriptional regulator MraZ from Mesoplasma florum (strain ATCC 33453 / NBRC 100688 / NCTC 11704 / L1) (Acholeplasma florum).